The primary structure comprises 344 residues: MTAAVDGKGPAAMNTHFPDAETVRTVLTLAVRAPSIHNTQPWRWRVCPTSLELFSRPDMQLRSTDPDGRELILSCGVALHHCVVALASLGWQAKVNRFPDPKDRCHLATIGVQPLVPDQADVALAAAIPRRRTDRRAYSCWPVPGGDIALMAARAARGGVMLRQVSALDRMKAIVAQAVLDHVTDEEYLRELTIWSGRYGSVAGVPARNEPPSDPSAPIPGRLFAGPGLSQPSDVLPADDGAAILALGTETDDRLARLRAGEAASIVLLTATAMGLACCPITEPLEIAKTRDAVRAEVFGAGGYPQMLLRVGWAPINADPLPPTPRRELSQVVEWPEELLRQRC.

Residues 40-44 and R326 contribute to the FMN site; that span reads QPWRW.

It belongs to the nitroreductase family. As to quaternary structure, interacts with human TLR2. FMN serves as cofactor.

Its function is as follows. Stimulates pro-inflammatory cytokine expression via TLR2 signaling pathway. Activation of TLR2 results in the phosphorylation and activation of NF-kappa-B. Also induces TLR2 expression. May influence the innate immune responses to facilitate the survival of M.tuberculosis in the granulomatous microenvironment. The protein is Putative NAD(P)H nitroreductase MT3217 of Mycobacterium tuberculosis (strain CDC 1551 / Oshkosh).